An 85-amino-acid chain; its full sequence is ADAAAGGKVFNANCAACHASGGGQINGAKTLKKNALTANGKDTVEAIVAQVTNGKGAMPAFKGRLSDDQIQSVALYVLDKAEKGW.

Heme c is bound by residues C14, C17, H18, and M58.

It belongs to the cytochrome c family. PetJ subfamily. In terms of assembly, monomer. Post-translationally, binds 1 heme c group covalently per subunit.

The protein localises to the cellular thylakoid lumen. Functions as an electron carrier between membrane-bound cytochrome b6-f and photosystem I in oxygenic photosynthesis. The chain is Cytochrome c6 (petJ) from Leptolyngbya boryana (Plectonema boryanum).